The sequence spans 507 residues: Histidine ammonia-lyase (507 aa).

Positions 141–143 (ASG) form a cross-link, 5-imidazolinone (Ala-Gly). Position 142 is a 2,3-didehydroalanine (Ser) (serine 142).

The protein belongs to the PAL/histidase family. In terms of processing, contains an active site 4-methylidene-imidazol-5-one (MIO), which is formed autocatalytically by cyclization and dehydration of residues Ala-Ser-Gly.

It localises to the cytoplasm. It carries out the reaction L-histidine = trans-urocanate + NH4(+). It participates in amino-acid degradation; L-histidine degradation into L-glutamate; N-formimidoyl-L-glutamate from L-histidine: step 1/3. The protein is Histidine ammonia-lyase of Burkholderia ambifaria (strain ATCC BAA-244 / DSM 16087 / CCUG 44356 / LMG 19182 / AMMD) (Burkholderia cepacia (strain AMMD)).